Consider the following 205-residue polypeptide: MANTLYDRTIAFAGMCQAVALVQQIARNGHCDQDAFETSIKAILNTNPANTLDVFGNESQLKLGLECLVKGIDSTPTGSEVTRYLISLMALERKLMGRNDAMSQLGDRIQMVQRQTEHYDLFEEQMISNVASIYLDVISPIGPRIQVTGTPTVLQQTSNQHKVRALLLSGIRSAVLWRQVGGRRRHLIFGRKKMVEQAQILLARM.

The protein belongs to the HflD family.

The protein localises to the cytoplasm. It localises to the cell inner membrane. The polypeptide is High frequency lysogenization protein HflD homolog (Vibrio vulnificus (strain CMCP6)).